The following is a 245-amino-acid chain: 1-(5-phosphoribosyl)-5-[(5-phosphoribosylamino)methylideneamino] imidazole-4-carboxamide isomerase (245 aa).

Aspartate 8 serves as the catalytic Proton acceptor. Residue aspartate 130 is the Proton donor of the active site.

It belongs to the HisA/HisF family.

The protein localises to the cytoplasm. It carries out the reaction 1-(5-phospho-beta-D-ribosyl)-5-[(5-phospho-beta-D-ribosylamino)methylideneamino]imidazole-4-carboxamide = 5-[(5-phospho-1-deoxy-D-ribulos-1-ylimino)methylamino]-1-(5-phospho-beta-D-ribosyl)imidazole-4-carboxamide. Its pathway is amino-acid biosynthesis; L-histidine biosynthesis; L-histidine from 5-phospho-alpha-D-ribose 1-diphosphate: step 4/9. The protein is 1-(5-phosphoribosyl)-5-[(5-phosphoribosylamino)methylideneamino] imidazole-4-carboxamide isomerase of Pseudomonas aeruginosa (strain LESB58).